The chain runs to 194 residues: Probable GTP-binding protein EngB (194 aa).

In terms of domain architecture, EngB-type G spans 22–194 (GKPEIALVGR…EVWHWIEQHI (173 aa)). Residues 30–37 (GRSNVGKS), 57–61 (GKTQT), 75–78 (DVPG), 142–145 (TKSD), and 175–177 (FSS) contribute to the GTP site. The Mg(2+) site is built by Ser37 and Thr59.

This sequence belongs to the TRAFAC class TrmE-Era-EngA-EngB-Septin-like GTPase superfamily. EngB GTPase family. The cofactor is Mg(2+).

Necessary for normal cell division and for the maintenance of normal septation. This Leuconostoc mesenteroides subsp. mesenteroides (strain ATCC 8293 / DSM 20343 / BCRC 11652 / CCM 1803 / JCM 6124 / NCDO 523 / NBRC 100496 / NCIMB 8023 / NCTC 12954 / NRRL B-1118 / 37Y) protein is Probable GTP-binding protein EngB.